A 324-amino-acid polypeptide reads, in one-letter code: tRNA U34 carboxymethyltransferase (324 aa).

Carboxy-S-adenosyl-L-methionine-binding positions include Lys-92, Trp-106, Lys-111, Gly-131, 153–155 (DPS), Met-197, Tyr-201, and Arg-316.

This sequence belongs to the class I-like SAM-binding methyltransferase superfamily. CmoB family. As to quaternary structure, homotetramer.

It catalyses the reaction carboxy-S-adenosyl-L-methionine + 5-hydroxyuridine(34) in tRNA = 5-carboxymethoxyuridine(34) in tRNA + S-adenosyl-L-homocysteine + H(+). Functionally, catalyzes carboxymethyl transfer from carboxy-S-adenosyl-L-methionine (Cx-SAM) to 5-hydroxyuridine (ho5U) to form 5-carboxymethoxyuridine (cmo5U) at position 34 in tRNAs. The sequence is that of tRNA U34 carboxymethyltransferase from Hahella chejuensis (strain KCTC 2396).